The sequence spans 262 residues: Acyl-[acyl-carrier-protein]--UDP-N-acetylglucosamine O-acyltransferase (262 aa).

It belongs to the transferase hexapeptide repeat family. LpxA subfamily. In terms of assembly, homotrimer.

The protein localises to the cytoplasm. The catalysed reaction is a (3R)-hydroxyacyl-[ACP] + UDP-N-acetyl-alpha-D-glucosamine = a UDP-3-O-[(3R)-3-hydroxyacyl]-N-acetyl-alpha-D-glucosamine + holo-[ACP]. It participates in glycolipid biosynthesis; lipid IV(A) biosynthesis; lipid IV(A) from (3R)-3-hydroxytetradecanoyl-[acyl-carrier-protein] and UDP-N-acetyl-alpha-D-glucosamine: step 1/6. Its function is as follows. Involved in the biosynthesis of lipid A, a phosphorylated glycolipid that anchors the lipopolysaccharide to the outer membrane of the cell. This is Acyl-[acyl-carrier-protein]--UDP-N-acetylglucosamine O-acyltransferase from Sodalis glossinidius (strain morsitans).